The chain runs to 982 residues: Envelope glycoprotein gp130 (982 aa).

Over 1 to 63 (MEQEHVMTLK…YRCYTLCATS (63 aa)) the chain is Cytoplasmic. A helical; Signal-anchor for type III membrane protein membrane pass occupies residues 64–86 (TRIMFWILFFLLCFSIVTLSTII). Residues 87-953 (SILRYQWKEA…AFSFLGYVKP (867 aa)) are Lumenal-facing. 11 N-linked (GlcNAc...) asparagine; by host glycosylation sites follow: asparagine 118, asparagine 139, asparagine 266, asparagine 283, asparagine 307, asparagine 390, asparagine 409, asparagine 420, asparagine 489, asparagine 521, and asparagine 536. Residues 548 to 567 (QQKTSCERKKGRRQRRSVST) form a disordered region. The interval 569–591 (NLRRIQEAGLGLANAITTVAKIS) is fusion peptide. N-linked (GlcNAc...) asparagine; by host glycans are attached at residues asparagine 654, asparagine 690, asparagine 775, asparagine 800, and asparagine 825. Residues 954–974 (VLLGFVIIFCIILIIKIIGWL) form a helical membrane-spanning segment. Residues 975 to 982 (QNTRKKDQ) lie on the Cytoplasmic side of the membrane. Residues 978-980 (RKK) carry the Endoplasmic reticulum retention signal motif.

The mature envelope protein consists of a trimer of SU-TM heterodimers. The N-terminus of leader peptide specifically interacts with Gag protein. This specific interaction between Gag protein and Env glycoprotein may allow particle egress. Envelope glycoproteins are synthesized as an inactive precursor that is processed by host furin or a furin-like protease to yield a functional hetero-oligomeric complex. A 9 kDa protein corresponding to the N-terminus of the leader peptide may arise through low efficient cleavage by host signal peptidase. In terms of processing, the transmembrane protein and the surface protein are N-glycosylated.

It localises to the host endoplasmic reticulum membrane. Its subcellular location is the virion membrane. Functionally, the surface protein (SU) attaches the virus to the host cell by binding to the cell receptor. This interaction triggers the refolding of transmembrane protein (TM) and is thought to activate its fusogenic potential by unmasking its fusion peptide. The transmembrane protein (TM) acts as a class I viral fusion protein. Under the current model, the protein has at least 3 conformational states: pre-fusion native state, pre-hairpin intermediate state, and post-fusion hairpin state. During viral and target cell membrane fusion, the coiled coil regions (heptad repeats) assume a trimer-of-hairpins structure, positioning the fusion peptide in close proximity to the C-terminal region of the ectodomain. The formation of this structure appears to drive apposition and subsequent fusion of viral and target cell membranes. Membranes fusion leads to delivery of the nucleocapsid into the cytoplasm. In terms of biological role, the leader peptide is a component of released, infectious virions and is required for particle budding. The chain is Envelope glycoprotein gp130 (env) from Feline foamy virus (FFV).